The sequence spans 93 residues: Small ribosomal subunit protein uS19 (93 aa).

This sequence belongs to the universal ribosomal protein uS19 family.

Functionally, protein S19 forms a complex with S13 that binds strongly to the 16S ribosomal RNA. The protein is Small ribosomal subunit protein uS19 of Wolinella succinogenes (strain ATCC 29543 / DSM 1740 / CCUG 13145 / JCM 31913 / LMG 7466 / NCTC 11488 / FDC 602W) (Vibrio succinogenes).